A 127-amino-acid polypeptide reads, in one-letter code: Fluoride-specific ion channel FluC (127 aa).

4 consecutive transmembrane segments (helical) span residues 4–24 (LLLA…LLSM), 35–55 (LGTL…FAWF), 71–91 (TGFC…VFLL), and 103–123 (VFVN…LFSA). 2 residues coordinate Na(+): Gly75 and Thr78.

This sequence belongs to the fluoride channel Fluc/FEX (TC 1.A.43) family.

The protein resides in the cell inner membrane. It catalyses the reaction fluoride(in) = fluoride(out). Na(+) is not transported, but it plays an essential structural role and its presence is essential for fluoride channel function. Functionally, fluoride-specific ion channel. Important for reducing fluoride concentration in the cell, thus reducing its toxicity. The protein is Fluoride-specific ion channel FluC of Escherichia coli O8 (strain IAI1).